The following is a 229-amino-acid chain: PKHD-type hydroxylase BRADO4652 (229 aa).

The region spanning 78 to 180 (QIFPPLFNRY…RVASFFWMQS (103 aa)) is the Fe2OG dioxygenase domain. Fe cation-binding residues include H98, D100, and H161. 2-oxoglutarate is bound at residue R171.

Fe(2+) is required as a cofactor. The cofactor is L-ascorbate.

This Bradyrhizobium sp. (strain ORS 278) protein is PKHD-type hydroxylase BRADO4652.